Reading from the N-terminus, the 290-residue chain is Nucleotide-binding protein XfasM23_0667 (290 aa).

13–20 (GLSGSGKS) lines the ATP pocket. Position 65 to 68 (65 to 68 (DIRS)) interacts with GTP.

This sequence belongs to the RapZ-like family.

Its function is as follows. Displays ATPase and GTPase activities. This chain is Nucleotide-binding protein XfasM23_0667, found in Xylella fastidiosa (strain M23).